The primary structure comprises 512 residues: Maturase K (512 aa).

It belongs to the intron maturase 2 family. MatK subfamily.

Its subcellular location is the plastid. The protein localises to the chloroplast. Usually encoded in the trnK tRNA gene intron. Probably assists in splicing its own and other chloroplast group II introns. This chain is Maturase K, found in Lemna minuta (Least duckweed).